A 202-amino-acid chain; its full sequence is Dephospho-CoA kinase (202 aa).

One can recognise a DPCK domain in the interval 6–202 (KVSITGDLSS…EYFYALKGAL (197 aa)). 14 to 19 (SSGKTE) lines the ATP pocket.

This sequence belongs to the CoaE family.

It is found in the cytoplasm. It carries out the reaction 3'-dephospho-CoA + ATP = ADP + CoA + H(+). It participates in cofactor biosynthesis; coenzyme A biosynthesis; CoA from (R)-pantothenate: step 5/5. Functionally, catalyzes the phosphorylation of the 3'-hydroxyl group of dephosphocoenzyme A to form coenzyme A. The sequence is that of Dephospho-CoA kinase from Chlamydia felis (strain Fe/C-56) (Chlamydophila felis).